Consider the following 65-residue polypeptide: MPKIKTVRGAAKRFKKTASGGFKRKQSHLRHILTKKTTKRKRHLRHKSMVAKADQVLVVACLPYA.

Positions 1–26 are disordered; it reads MPKIKTVRGAAKRFKKTASGGFKRKQ. Over residues 10-26 the composition is skewed to basic residues; that stretch reads AAKRFKKTASGGFKRKQ.

Belongs to the bacterial ribosomal protein bL35 family.

This is Large ribosomal subunit protein bL35 from Actinobacillus pleuropneumoniae serotype 7 (strain AP76).